Reading from the N-terminus, the 344-residue chain is Cyclin-G2 (344 aa).

Over residues Glu-301–Cys-313 the composition is skewed to acidic residues. The interval Glu-301–Ser-320 is disordered.

The protein belongs to the cyclin family. Cyclin G subfamily. As to expression, high levels in cerebellum, thymus, spleen and prostate. Low levels in skeletal muscle.

The protein resides in the cytoplasm. May play a role in growth regulation and in negative regulation of cell cycle progression. The sequence is that of Cyclin-G2 (CCNG2) from Homo sapiens (Human).